Here is a 567-residue protein sequence, read N- to C-terminus: Urease subunit alpha (567 aa).

One can recognise a Urease domain in the interval 129–567 (GGIDTHIHFI…LPMAQRYFLF (439 aa)). Ni(2+) is bound by residues His-134, His-136, and Lys-217. An N6-carboxylysine modification is found at Lys-217. His-219 serves as a coordination point for substrate. Residues His-246 and His-272 each coordinate Ni(2+). Catalysis depends on His-320, which acts as the Proton donor. Asp-360 contributes to the Ni(2+) binding site.

Belongs to the metallo-dependent hydrolases superfamily. Urease alpha subunit family. Heterotrimer of UreA (gamma), UreB (beta) and UreC (alpha) subunits. Three heterotrimers associate to form the active enzyme. Ni cation is required as a cofactor. In terms of processing, carboxylation allows a single lysine to coordinate two nickel ions.

The protein localises to the cytoplasm. The catalysed reaction is urea + 2 H2O + H(+) = hydrogencarbonate + 2 NH4(+). It participates in nitrogen metabolism; urea degradation; CO(2) and NH(3) from urea (urease route): step 1/1. The polypeptide is Urease subunit alpha (Delftia acidovorans (strain DSM 14801 / SPH-1)).